The chain runs to 149 residues: Transcriptional repressor NrdR (149 aa).

The segment at 3 to 34 is a zinc-finger region; the sequence is CPYCSYEESKVVDSRSAEDYNAIRRRRECLRC. In terms of domain architecture, ATP-cone spans 49-139; the sequence is ILVIKKDLSR…VYRQFKDINT (91 aa).

The protein belongs to the NrdR family. Zn(2+) serves as cofactor.

Its function is as follows. Negatively regulates transcription of bacterial ribonucleotide reductase nrd genes and operons by binding to NrdR-boxes. In Clostridium perfringens (strain ATCC 13124 / DSM 756 / JCM 1290 / NCIMB 6125 / NCTC 8237 / Type A), this protein is Transcriptional repressor NrdR.